The chain runs to 99 residues: MQITDVKIRKVATEGRMKALASITLDHEFVVHDLRIIEGSSGLFVAMPSKRTPEGIFRDIAHPINGEMRQKVEAAVLETYSNMDVEILDPQHVSYGTHE.

The protein belongs to the SpoVG family.

Could be involved in septation. This chain is Putative septation protein SpoVG, found in Exiguobacterium sp. (strain ATCC BAA-1283 / AT1b).